A 316-amino-acid chain; its full sequence is FAD:protein FMN transferase (316 aa).

FAD is bound by residues methionine 14, 88-90, and aspartate 146; that span reads AFN. Mg(2+) is bound at residue alanine 149. FAD contacts are provided by lysine 152 and leucine 231. Residues aspartate 257 and threonine 261 each coordinate Mg(2+).

This sequence belongs to the ApbE family. The cofactor is Mg(2+).

The protein resides in the cytoplasm. It carries out the reaction L-threonyl-[protein] + FAD = FMN-L-threonyl-[protein] + AMP + H(+). Flavin transferase that catalyzes the transfer of the FMN moiety of FAD and its covalent binding to the hydroxyl group of a threonine residue in a target flavoprotein. Is responsible for the modification of the fumarate reductase KPK_2907. The polypeptide is FAD:protein FMN transferase (Klebsiella pneumoniae (strain 342)).